A 688-amino-acid polypeptide reads, in one-letter code: Elongation factor G (688 aa).

The region spanning 8 to 282 (DKFRNFGIMA…GVVDYLPSPL (275 aa)) is the tr-type G domain. GTP-binding positions include 17-24 (AHIDAGKT), 81-85 (DTPGH), and 135-138 (NKMD).

It belongs to the TRAFAC class translation factor GTPase superfamily. Classic translation factor GTPase family. EF-G/EF-2 subfamily.

The protein localises to the cytoplasm. Its function is as follows. Catalyzes the GTP-dependent ribosomal translocation step during translation elongation. During this step, the ribosome changes from the pre-translocational (PRE) to the post-translocational (POST) state as the newly formed A-site-bound peptidyl-tRNA and P-site-bound deacylated tRNA move to the P and E sites, respectively. Catalyzes the coordinated movement of the two tRNA molecules, the mRNA and conformational changes in the ribosome. The sequence is that of Elongation factor G from Clostridium botulinum (strain Eklund 17B / Type B).